Consider the following 393-residue polypeptide: tRNA (guanine-N(7)-)-methyltransferase (393 aa).

The S-adenosyl-L-methionine site is built by E124, E149, and D176. D232 lines the substrate pocket.

The protein belongs to the class I-like SAM-binding methyltransferase superfamily. TrmB family.

The enzyme catalyses guanosine(46) in tRNA + S-adenosyl-L-methionine = N(7)-methylguanosine(46) in tRNA + S-adenosyl-L-homocysteine. It participates in tRNA modification; N(7)-methylguanine-tRNA biosynthesis. In terms of biological role, catalyzes the formation of N(7)-methylguanine at position 46 (m7G46) in tRNA. The sequence is that of tRNA (guanine-N(7)-)-methyltransferase from Helicobacter pylori (strain HPAG1).